The primary structure comprises 289 residues: G1/S-specific cyclin-D2 (289 aa).

The Cyclin N-terminal domain occupies 26–151; it reads VLQNLLTIEE…VVLGKLKWNL (126 aa). Positions 264-289 are disordered; sequence DQRDGSKSEDELDQASTPTDVRDIDL. A Phosphoserine modification is found at Ser-271. Residue Thr-280 is modified to Phosphothreonine.

This sequence belongs to the cyclin family. Cyclin D subfamily. In terms of assembly, interacts with either CDK4 or CDK6 protein kinase to form a serine/threonine kinase holoenzyme complex. The cyclin subunit imparts substrate specificity to the complex. Phosphorylation at Thr-280 by MAP kinases is required for ubiquitination and degradation by the DCX(AMBRA1) complex. Post-translationally, ubiquitinated by the DCX(AMBRA1) complex during the transition from G1 to S cell phase, leading to its degradation: ubiquitination is dependent on Thr-280 phosphorylation. The DCX(AMBRA1) complex represents the major regulator of CCND2 stability during the G1/S transition. Polyubiquitinated by the SCF(FBXL2) complex, leading to proteasomal degradation.

It localises to the nucleus. Its subcellular location is the cytoplasm. The protein localises to the nucleus membrane. Its function is as follows. Regulatory component of the cyclin D2-CDK4 (DC) complex that phosphorylates and inhibits members of the retinoblastoma (RB) protein family including RB1 and regulates the cell-cycle during G(1)/S transition. Phosphorylation of RB1 allows dissociation of the transcription factor E2F from the RB/E2F complex and the subsequent transcription of E2F target genes which are responsible for the progression through the G(1) phase. Hypophosphorylates RB1 in early G(1) phase. Cyclin D-CDK4 complexes are major integrators of various mitogenenic and antimitogenic signals. This Homo sapiens (Human) protein is G1/S-specific cyclin-D2.